Consider the following 976-residue polypeptide: Dibasic-processing endoprotease (976 aa).

Residues 1 to 17 form the signal peptide; that stretch reads MLRKFILGLLLASQAVA. Asn156 carries N-linked (GlcNAc...) asparagine glycosylation. A compositionally biased stretch (basic and acidic residues) spans 172–212; that stretch reads AEEAQKAQDDKGDKKEDQKDDKKEGQEAQKEGDKEDNKGDD. The segment at 172–246 is disordered; it reads AEEAQKAQDD…VQWKPVDESM (75 aa). Residues 213 to 231 show a composition bias toward acidic residues; it reads KEDGEEDDDDDEDEDDDDA. Positions 277–595 constitute a Peptidase S8 domain; the sequence is QWYLHNVHKA…YGKLDASKIV (319 aa). 2 N-linked (GlcNAc...) asparagine glycosylation sites follow: Asn291 and Asn299. Residue Asp311 is the Charge relay system of the active site. N-linked (GlcNAc...) asparagine glycosylation is present at Asn336. Active-site charge relay system residues include His349 and Ser528. The chain crosses the membrane as a helical span at residues 524-544; it reads HGGTSAAAPLAAGVFALALSV. The P/Homo B domain occupies 604–737; it reads VNNQTSFHSE…QLNVFGEQKD (134 aa). N-linked (GlcNAc...) asparagine glycosylation occurs at Asn606. The segment at 733–848 is disordered; sequence GEQKDKREEN…SDSHTSWWPD (116 aa). Residues 734–830 are compositionally biased toward basic and acidic residues; that stretch reads EQKDKREENK…EEKPEEKPVD (97 aa). A helical transmembrane segment spans residues 855–875; that stretch reads AWLYGAVLLVGGFIAVIGIYA. Asn886 is a glycosylation site (N-linked (GlcNAc...) asparagine). The segment at 914–976 is disordered; the sequence is PEDTHRRSGD…RDNDRQNLLG (63 aa). Basic and acidic residues-rich tracts occupy residues 915-928 and 940-976; these read EDTHRRSGDNDRLY and MFRISDEGEDAHDVEPELNRVSMEADKRDNDRQNLLG.

This sequence belongs to the peptidase S8 family. Furin subfamily.

The protein localises to the membrane. The polypeptide is Dibasic-processing endoprotease (XPR6) (Yarrowia lipolytica (strain CLIB 122 / E 150) (Yeast)).